A 402-amino-acid chain; its full sequence is Multidrug resistance protein MdtH (402 aa).

Topologically, residues 1 to 12 (MSRVSQARNLGK) are cytoplasmic. Residues 13–33 (YFLLIDNMLVVLGFFVVFPLI) traverse the membrane as a helical segment. Residues 34–98 (SIRFVDQMGW…GFATMGIAHE (65 aa)) lie on the Periplasmic side of the membrane. Residues 99-116 (PWLLWFSCLLSGLGGTLF) traverse the membrane as a helical segment. Residues 117–138 (DPPRSALVVKLIRPQQRGRFFS) are Cytoplasmic-facing. The chain crosses the membrane as a helical span at residues 139–159 (LLMMQDSASAVIGALLGSWLL). Residues 160–164 (QYDFR) lie on the Periplasmic side of the membrane. A helical transmembrane segment spans residues 165–185 (LVCATGPVLFVLCAAFNAWLL). Residues 186–213 (PAWKLSTVRTPVREGMTRVMRDKRFVTY) lie on the Cytoplasmic side of the membrane. Residues 214–234 (VLTLAGYYMLAVQVMLMLPIM) form a helical membrane-spanning segment. At 235–243 (VNDVAGAPS) the chain is on the periplasmic side. Residues 244–264 (AVKWMYAIEACLSLTLLYPIA) form a helical membrane-spanning segment. Residues 265-276 (RWSEKHFRLEHR) lie on the Cytoplasmic side of the membrane. A helical membrane pass occupies residues 277–297 (LMAGLLIMSLSMMPVGMVSGL). The Periplasmic portion of the chain corresponds to 298–299 (QQ). Residues 300–320 (LFTLICLFYIGSIIAEPARET) traverse the membrane as a helical segment. Residues 321–339 (LSASLADARARGSYMGFSR) are Cytoplasmic-facing. The helical transmembrane segment at 340 to 360 (LGLAIGGAIGYIGGGWLFDLG) threads the bilayer. Topologically, residues 361–367 (KSAHQPE) are periplasmic. The helical transmembrane segment at 368–388 (LPWMMLGIIGIFTFLALGWQF) threads the bilayer. Residues 389–402 (SQKRAARRLLERDA) lie on the Cytoplasmic side of the membrane.

This sequence belongs to the major facilitator superfamily. DHA1 family. MdtH (TC 2.A.1.2.21) subfamily.

Its subcellular location is the cell inner membrane. This Shigella flexneri serotype 5b (strain 8401) protein is Multidrug resistance protein MdtH.